Reading from the N-terminus, the 157-residue chain is Ribosome maturation factor RimP (157 aa).

It belongs to the RimP family.

The protein localises to the cytoplasm. In terms of biological role, required for maturation of 30S ribosomal subunits. In Lactococcus lactis subsp. lactis (strain IL1403) (Streptococcus lactis), this protein is Ribosome maturation factor RimP.